A 405-amino-acid polypeptide reads, in one-letter code: GTPase Obg (405 aa).

The Obg domain occupies 1–159 (MRFIDEAVVT…KVLKFELKVV (159 aa)). The OBG-type G domain occupies 160 to 333 (ADVGLIGLPN…IKYHLMNEIE (174 aa)). GTP contacts are provided by residues 166–173 (GLPNAGKS), 191–195 (FTTLV), 213–216 (DIPG), 283–286 (NKID), and 314–316 (ATL). Residues serine 173 and threonine 193 each coordinate Mg(2+). The span at 371–382 (YRAARKAAREGT) shows a compositional bias: basic and acidic residues. The tract at residues 371 to 405 (YRAARKAAREGTDLSDDDFDDSDDDDDGVEVVYAP) is disordered. The span at 383-399 (DLSDDDFDDSDDDDDGV) shows a compositional bias: acidic residues.

It belongs to the TRAFAC class OBG-HflX-like GTPase superfamily. OBG GTPase family. As to quaternary structure, monomer. The cofactor is Mg(2+).

It is found in the cytoplasm. Functionally, an essential GTPase which binds GTP, GDP and possibly (p)ppGpp with moderate affinity, with high nucleotide exchange rates and a fairly low GTP hydrolysis rate. Plays a role in control of the cell cycle, stress response, ribosome biogenesis and in those bacteria that undergo differentiation, in morphogenesis control. This Psychrobacter cryohalolentis (strain ATCC BAA-1226 / DSM 17306 / VKM B-2378 / K5) protein is GTPase Obg.